A 353-amino-acid chain; its full sequence is Glutamine synthetase nodule isozyme (353 aa).

Positions Ile19–Gly99 constitute a GS beta-grasp domain. Residues Lys106–Leu353 form the GS catalytic domain.

The protein belongs to the glutamine synthetase family. In terms of assembly, homooctamer.

Its subcellular location is the cytoplasm. The enzyme catalyses L-glutamate + NH4(+) + ATP = L-glutamine + ADP + phosphate + H(+). The polypeptide is Glutamine synthetase nodule isozyme (Lupinus luteus (European yellow lupine)).